The primary structure comprises 494 residues: Glutamyl-tRNA(Gln) amidotransferase subunit A (494 aa).

Active-site charge relay system residues include K88 and S163. Residue S187 is the Acyl-ester intermediate of the active site.

The protein belongs to the amidase family. GatA subfamily. Heterotrimer of A, B and C subunits.

It catalyses the reaction L-glutamyl-tRNA(Gln) + L-glutamine + ATP + H2O = L-glutaminyl-tRNA(Gln) + L-glutamate + ADP + phosphate + H(+). In terms of biological role, allows the formation of correctly charged Gln-tRNA(Gln) through the transamidation of misacylated Glu-tRNA(Gln) in organisms which lack glutaminyl-tRNA synthetase. The reaction takes place in the presence of glutamine and ATP through an activated gamma-phospho-Glu-tRNA(Gln). The chain is Glutamyl-tRNA(Gln) amidotransferase subunit A from Corynebacterium diphtheriae (strain ATCC 700971 / NCTC 13129 / Biotype gravis).